The sequence spans 197 residues: ATP synthase subunit delta', mitochondrial (197 aa).

A mitochondrion-targeting transit peptide spans 1-19 (MFRRATSTFLSRASATRRF).

It belongs to the ATPase epsilon chain family. In terms of assembly, F-type ATPases have 2 components, CF(1) - the catalytic core - and CF(0) - the membrane proton channel. CF(1) has five subunits: alpha(3), beta(3), gamma(1), delta(1), epsilon(1). CF(0) has three main subunits: a, b and c.

The protein resides in the mitochondrion. It is found in the mitochondrion inner membrane. Functionally, mitochondrial membrane ATP synthase (F(1)F(0) ATP synthase or Complex V) produces ATP from ADP in the presence of a proton gradient across the membrane which is generated by electron transport complexes of the respiratory chain. F-type ATPases consist of two structural domains, F(1) - containing the extramembraneous catalytic core, and F(0) - containing the membrane proton channel, linked together by a central stalk and a peripheral stalk. During catalysis, ATP turnover in the catalytic domain of F(1) is coupled via a rotary mechanism of the central stalk subunits to proton translocation. Part of the complex F(1) domain and of the central stalk which is part of the complex rotary element. Rotation of the central stalk against the surrounding alpha(3)beta(3) subunits leads to hydrolysis of ATP in three separate catalytic sites on the beta subunits. This Pisum sativum (Garden pea) protein is ATP synthase subunit delta', mitochondrial.